Here is a 368-residue protein sequence, read N- to C-terminus: MVVLGSTGSIGKNALKIAKKFGVKIEALSCGKNIALINEQIKVFKPKKVAILDPNDLNNLEPLGAEVFVGLDGIDAMIEECVSNLVINAIVGVAGLKASFKSLQRNKKLALANKESLVSAGHLLDISQITPVDSEHFGLWALLQNKTLKPKSLIISASGGAFRDTPLDLIAIQNAQNALKHPNWSMGDKITIDSASMVNKLFEILETYWLFGASLKIDALIERSSIVHALVEFEDNSVIAHLASADMQLPISYAINPKLASLSASIKPLDLYALSAIKFEPISVERYTLWRYKDLLLENPKLGVVLNASNEVAMKKFLNQEIAFGGFIQIISQALELYAKKSFKLSSLDEVLALDKEVRERFGSVARV.

8 residues coordinate NADPH: Thr-7, Gly-8, Ser-9, Ile-10, Gly-31, Lys-32, Asn-33, and Asn-113. Residue Lys-114 participates in 1-deoxy-D-xylulose 5-phosphate binding. An NADPH-binding site is contributed by Glu-115. Residue Asp-133 participates in Mn(2+) binding. Positions 134, 135, 158, and 181 each coordinate 1-deoxy-D-xylulose 5-phosphate. Glu-135 contributes to the Mn(2+) binding site. Residue Gly-187 coordinates NADPH. Residues Ser-194, Asn-199, Lys-200, and Glu-203 each contribute to the 1-deoxy-D-xylulose 5-phosphate site. Glu-203 contributes to the Mn(2+) binding site.

It belongs to the DXR family. The cofactor is Mg(2+). Mn(2+) serves as cofactor.

It carries out the reaction 2-C-methyl-D-erythritol 4-phosphate + NADP(+) = 1-deoxy-D-xylulose 5-phosphate + NADPH + H(+). Its pathway is isoprenoid biosynthesis; isopentenyl diphosphate biosynthesis via DXP pathway; isopentenyl diphosphate from 1-deoxy-D-xylulose 5-phosphate: step 1/6. In terms of biological role, catalyzes the NADPH-dependent rearrangement and reduction of 1-deoxy-D-xylulose-5-phosphate (DXP) to 2-C-methyl-D-erythritol 4-phosphate (MEP). This is 1-deoxy-D-xylulose 5-phosphate reductoisomerase from Helicobacter pylori (strain J99 / ATCC 700824) (Campylobacter pylori J99).